The following is a 958-amino-acid chain: Transportin MOS14 (958 aa).

The Importin N-terminal domain maps to 26–93; the sequence is ADRWLQNFQG…RQSLTTLLKK (68 aa).

The protein belongs to the importin beta family. In terms of assembly, interacts with RS2Z33, RSZ21, RS31A, SR34 and RAN1.

It localises to the nucleus. Functions as a nuclear import receptor for serine-arginine rich (SR) proteins. Regulates nuclear import of SR proteins that are required for proper splicing of the two resistance (R) genes SNC1 and RPS4, a crucial step for their functions in plant immunity. The chain is Transportin MOS14 from Arabidopsis thaliana (Mouse-ear cress).